We begin with the raw amino-acid sequence, 319 residues long: ATP-dependent 6-phosphofructokinase (319 aa).

An ATP-binding site is contributed by glycine 11. Residue 21-25 (RAVVR) coordinates ADP. Residues 72 to 73 (RY) and 102 to 105 (GDGS) contribute to the ATP site. Aspartate 103 lines the Mg(2+) pocket. 125-127 (TID) lines the substrate pocket. The active-site Proton acceptor is aspartate 127. Arginine 154 contacts ADP. Substrate contacts are provided by residues arginine 162 and 169-171 (MGR). ADP contacts are provided by residues 185–187 (GAE), arginine 211, and 213–215 (KKH). Substrate-binding positions include glutamate 222, arginine 243, and 249–252 (HVQR).

The protein belongs to the phosphofructokinase type A (PFKA) family. ATP-dependent PFK group I subfamily. Prokaryotic clade 'B1' sub-subfamily. As to quaternary structure, homotetramer. Mg(2+) serves as cofactor.

It localises to the cytoplasm. It catalyses the reaction beta-D-fructose 6-phosphate + ATP = beta-D-fructose 1,6-bisphosphate + ADP + H(+). It functions in the pathway carbohydrate degradation; glycolysis; D-glyceraldehyde 3-phosphate and glycerone phosphate from D-glucose: step 3/4. With respect to regulation, allosterically activated by ADP and other diphosphonucleosides, and allosterically inhibited by phosphoenolpyruvate. Functionally, catalyzes the phosphorylation of D-fructose 6-phosphate to fructose 1,6-bisphosphate by ATP, the first committing step of glycolysis. The sequence is that of ATP-dependent 6-phosphofructokinase from Listeria monocytogenes serotype 4b (strain CLIP80459).